The chain runs to 265 residues: 4-hydroxy-tetrahydrodipicolinate reductase (265 aa).

Glycine 9–methionine 14 lines the NAD(+) pocket. NADP(+) is bound at residue arginine 37. Residues glycine 98 to threonine 100 and alanine 124 to phenylalanine 127 contribute to the NAD(+) site. The active-site Proton donor/acceptor is histidine 154. (S)-2,3,4,5-tetrahydrodipicolinate is bound at residue histidine 155. Catalysis depends on lysine 158, which acts as the Proton donor. Glycine 164–threonine 165 contacts (S)-2,3,4,5-tetrahydrodipicolinate.

The protein belongs to the DapB family.

Its subcellular location is the cytoplasm. The enzyme catalyses (S)-2,3,4,5-tetrahydrodipicolinate + NAD(+) + H2O = (2S,4S)-4-hydroxy-2,3,4,5-tetrahydrodipicolinate + NADH + H(+). It catalyses the reaction (S)-2,3,4,5-tetrahydrodipicolinate + NADP(+) + H2O = (2S,4S)-4-hydroxy-2,3,4,5-tetrahydrodipicolinate + NADPH + H(+). Its pathway is amino-acid biosynthesis; L-lysine biosynthesis via DAP pathway; (S)-tetrahydrodipicolinate from L-aspartate: step 4/4. In terms of biological role, catalyzes the conversion of 4-hydroxy-tetrahydrodipicolinate (HTPA) to tetrahydrodipicolinate. This Geobacillus kaustophilus (strain HTA426) protein is 4-hydroxy-tetrahydrodipicolinate reductase.